A 679-amino-acid chain; its full sequence is Enzymatic polyprotein (679 aa).

The protease stretch occupies residues 40 to 130 (LHCFVDTGAS…LYEPFIQFTD (91 aa)). Aspartate 45 is a catalytic residue. One can recognise a Reverse transcriptase domain in the interval 272–452 (LKVIKPSKSP…KKINFLGLEI (181 aa)).

It belongs to the caulimoviridae enzymatic polyprotein family.

It catalyses the reaction DNA(n) + a 2'-deoxyribonucleoside 5'-triphosphate = DNA(n+1) + diphosphate. Its function is as follows. Encodes for at least two polypeptides: protease (PR) and reverse transcriptase (RT). The protease processes the polyprotein in cis. Reverse transcriptase is multifunctional enzyme that converts the viral RNA genome into dsDNA in viral cytoplasmic capsids. This enzyme displays a DNA polymerase activity that can copy either DNA or RNA templates, and a ribonuclease H (RNase H) activity that cleaves the RNA strand of RNA-DNA heteroduplexes in a partially processive 3'- to 5'-endonucleasic mode. Neo-synthesized pregenomic RNA (pgRNA) are encapsidated, and reverse-transcribed inside the nucleocapsid. Partial (+)DNA is synthesized from the (-)DNA template and generates the relaxed circular DNA (RC-DNA) genome. After budding and infection, the RC-DNA migrates in the nucleus, and is converted into a plasmid-like covalently closed circular DNA (cccDNA). The polypeptide is Enzymatic polyprotein (Arabidopsis thaliana (Mouse-ear cress)).